The following is a 278-amino-acid chain: MDVRQSIHSAHAKTLDTQGLRNEFLVEKVFVADEYTMVYSHIDRIIVGGIMPVTKTVSVGGEVGKQLGVSYFLERRELGVINIGGAGTITVDGQCYEIGHREALYVGKGAKEVVFASIDTATPAKFYYNCAPAHTTYPTKKVTPDEVSPVTLGDNLTSNRRTINKYFVPDVLETCQLSMGLTELAPGNLWNTMPCHTHERRMEVYFYFNMDDDACVFHMMGQPQETRHIVMHNEQAVISPSWSIHSGVGTKAYTFIWGMVGENQVFDDMDHVAVKDLR.

Residues His196, His198, Glu203, and His245 each contribute to the Zn(2+) site.

It belongs to the KduI family. As to quaternary structure, homohexamer. Zn(2+) serves as cofactor.

The enzyme catalyses 5-dehydro-4-deoxy-D-glucuronate = 3-deoxy-D-glycero-2,5-hexodiulosonate. Its pathway is glycan metabolism; pectin degradation; 2-dehydro-3-deoxy-D-gluconate from pectin: step 4/5. Catalyzes the isomerization of 5-dehydro-4-deoxy-D-glucuronate to 3-deoxy-D-glycero-2,5-hexodiulosonate. This chain is 4-deoxy-L-threo-5-hexosulose-uronate ketol-isomerase, found in Escherichia coli (strain SMS-3-5 / SECEC).